Reading from the N-terminus, the 398-residue chain is Nicotinate phosphoribosyltransferase (398 aa).

At H214 the chain carries Phosphohistidine; by autocatalysis.

This sequence belongs to the NAPRTase family. Transiently phosphorylated on a His residue during the reaction cycle. Phosphorylation strongly increases the affinity for substrates and increases the rate of nicotinate D-ribonucleotide production. Dephosphorylation regenerates the low-affinity form of the enzyme, leading to product release.

The catalysed reaction is nicotinate + 5-phospho-alpha-D-ribose 1-diphosphate + ATP + H2O = nicotinate beta-D-ribonucleotide + ADP + phosphate + diphosphate. It functions in the pathway cofactor biosynthesis; NAD(+) biosynthesis; nicotinate D-ribonucleotide from nicotinate: step 1/1. Its function is as follows. Catalyzes the synthesis of beta-nicotinate D-ribonucleotide from nicotinate and 5-phospho-D-ribose 1-phosphate at the expense of ATP. The protein is Nicotinate phosphoribosyltransferase of Xanthomonas campestris pv. campestris (strain 8004).